Reading from the N-terminus, the 492-residue chain is N-succinylglutamate 5-semialdehyde dehydrogenase (492 aa).

Residue 220–225 coordinates NAD(+); that stretch reads GSASTG. Catalysis depends on residues Glu243 and Cys277.

Belongs to the aldehyde dehydrogenase family. AstD subfamily.

It carries out the reaction N-succinyl-L-glutamate 5-semialdehyde + NAD(+) + H2O = N-succinyl-L-glutamate + NADH + 2 H(+). The protein operates within amino-acid degradation; L-arginine degradation via AST pathway; L-glutamate and succinate from L-arginine: step 4/5. Its function is as follows. Catalyzes the NAD-dependent reduction of succinylglutamate semialdehyde into succinylglutamate. This is N-succinylglutamate 5-semialdehyde dehydrogenase from Salmonella agona (strain SL483).